A 127-amino-acid chain; its full sequence is Large ribosomal subunit protein uL18 (127 aa).

A disordered region spans residues 1-26 (MASTLTVRKSLSDRAKARARRQARGR). Positions 17-26 (ARARRQARGR) are enriched in basic residues.

Belongs to the universal ribosomal protein uL18 family. As to quaternary structure, part of the 50S ribosomal subunit; part of the 5S rRNA/L5/L18/L25 subcomplex. Contacts the 5S and 23S rRNAs.

In terms of biological role, this is one of the proteins that bind and probably mediate the attachment of the 5S RNA into the large ribosomal subunit, where it forms part of the central protuberance. The protein is Large ribosomal subunit protein uL18 of Cutibacterium acnes (strain DSM 16379 / KPA171202) (Propionibacterium acnes).